Here is a 108-residue protein sequence, read N- to C-terminus: Peptidyl-prolyl cis-trans isomerase FKBP1A (108 aa).

The region spanning 20–108 (GQTCVVHYTG…VFDVELLKLE (89 aa)) is the PPIase FKBP-type domain. An N6-acetyllysine; alternate modification is found at Lys53. At Lys53 the chain carries N6-succinyllysine; alternate.

Belongs to the FKBP-type PPIase family. FKBP1 subfamily. Interacts with TGFBR1; prevents TGFBR1 phosphorylation by TGFBR2 and stabilizes it in the inactive conformation. Interacts with ACVR1B and SMAD7. Identified in a complex composed of RYR1, PDE4D, PKA, FKBP1A and protein phosphatase 1 (PP1). Interacts directly with RYR2 and RYR3. Interacts with GLMN; rapamycin and FK506 abolish the interaction with GLMN in a dose dependent manner. Interacts directly with RYR1.

It localises to the cytoplasm. Its subcellular location is the cytosol. It is found in the sarcoplasmic reticulum membrane. The enzyme catalyses [protein]-peptidylproline (omega=180) = [protein]-peptidylproline (omega=0). With respect to regulation, inhibited by both FK506 and rapamycin. Its function is as follows. Keeps in an inactive conformation TGFBR1, the TGF-beta type I serine/threonine kinase receptor, preventing TGF-beta receptor activation in absence of ligand. Recruits SMAD7 to ACVR1B which prevents the association of SMAD2 and SMAD3 with the activin receptor complex, thereby blocking the activin signal. May modulate the RYR1 calcium channel activity. PPIases accelerate the folding of proteins. It catalyzes the cis-trans isomerization of proline imidic peptide bonds in oligopeptides. The polypeptide is Peptidyl-prolyl cis-trans isomerase FKBP1A (FKBP1A) (Homo sapiens (Human)).